The primary structure comprises 834 residues: Translation initiation factor IF-2 (834 aa).

Residues 1–247 (MTEEKKFSGS…STPATVRKEQ (247 aa)) form a disordered region. Over residues 45–101 (GGSRPSRPARPNNNNQNRPNNGGQSQNRNNQNRSNTSTGGQNRSNNGGNRNNRPGSR) the composition is skewed to low complexity. Positions 109–125 (PMIREKKNWSTKPREGQ) are enriched in basic and acidic residues. Low complexity-rich tracts occupy residues 149 to 165 (ASAAAKHPKKPAAATKP) and 173 to 201 (ATKPATASTTTGAGKFGGALASGNNSARN). Basic residues predominate over residues 224 to 233 (GSKKSRRIAA). One can recognise a tr-type G domain in the interval 335 to 504 (SRPPVVTIMG…LLQAEVLELK (170 aa)). A G1 region spans residues 344–351 (GHVDHGKT). 344–351 (GHVDHGKT) lines the GTP pocket. The segment at 369–373 (GITQH) is G2. The G3 stretch occupies residues 390 to 393 (DTPG). Residues 390-394 (DTPGH) and 444-447 (NKID) each bind GTP. A G4 region spans residues 444 to 447 (NKID). The tract at residues 480 to 482 (SAK) is G5.

The protein belongs to the TRAFAC class translation factor GTPase superfamily. Classic translation factor GTPase family. IF-2 subfamily.

The protein localises to the cytoplasm. In terms of biological role, one of the essential components for the initiation of protein synthesis. Protects formylmethionyl-tRNA from spontaneous hydrolysis and promotes its binding to the 30S ribosomal subunits. Also involved in the hydrolysis of GTP during the formation of the 70S ribosomal complex. In Leuconostoc mesenteroides subsp. mesenteroides (strain ATCC 8293 / DSM 20343 / BCRC 11652 / CCM 1803 / JCM 6124 / NCDO 523 / NBRC 100496 / NCIMB 8023 / NCTC 12954 / NRRL B-1118 / 37Y), this protein is Translation initiation factor IF-2.